Here is a 196-residue protein sequence, read N- to C-terminus: Large ribosomal subunit protein bL20 (196 aa).

The protein belongs to the bacterial ribosomal protein bL20 family.

Its function is as follows. Binds directly to 23S ribosomal RNA and is necessary for the in vitro assembly process of the 50S ribosomal subunit. It is not involved in the protein synthesizing functions of that subunit. This is Large ribosomal subunit protein bL20 (rplT) from Oenococcus oeni (strain ATCC BAA-331 / PSU-1).